The sequence spans 274 residues: MTKKYDLHCHSTASDGVLSPTELVHRAYAQGVNVLALCDHDTIAGIDEAEIAAKEVGIELITGVEISTNWEGRGIHIVGLNFDKTHPKMTALLQSQKALREKRAVEIGDKLEKAGIPNAYDGAKALADGEVTRAHYARYLVQIGKVSNDGQAFKRYLGQGKSAFVKAEWADIPTAIETIHAAGGIAIIAHPLRYNMTGKWVRKLIVDFKAWGGDGMEMADCGQTKDQRQMLARWAKEFDLQGSVGSDFHFPCGWIELGKNLDLVDSVIPVWEKF.

Positions 8, 10, 15, 40, 65, 76, 190, 247, and 249 each coordinate Mn(2+).

The protein belongs to the PHP family. TrpH/YciV subfamily. It depends on Mn(2+) as a cofactor.

The catalysed reaction is a ribonucleoside 3',5'-bisphosphate + H2O = a ribonucleoside 5'-phosphate + phosphate. Functionally, efficiently catalyzes the hydrolysis of the 3'-phosphate from 3',5'-bis-phosphonucleotides as well as the successive hydrolysis of 5'-phosphomononucleotides from the 5'-end of short pieces of RNA and DNA, with no specificity toward the identity of the nucleotide base. Is more efficient at hydrolyzing RNA oligonucleotides than DNA oligonucleotides. This enzyme can also hydrolyze annealed DNA duplexes, albeit at a catalytic efficiency lower than that of the corresponding single-stranded oligonucleotides. The protein is 5'-3' exoribonuclease of Haemophilus influenzae (strain ATCC 51907 / DSM 11121 / KW20 / Rd).